A 272-amino-acid chain; its full sequence is Shikimate dehydrogenase (NADP(+)) (272 aa).

Shikimate-binding positions include 14 to 16 (SKS) and Thr61. The active-site Proton acceptor is Lys65. Glu77 serves as a coordination point for NADP(+). 2 residues coordinate shikimate: Asn86 and Asp102. Residues 126-130 (GAGGA), 149-154 (NRTVFR), and Met213 contribute to the NADP(+) site. Tyr215 is a shikimate binding site. Gly237 is an NADP(+) binding site.

The protein belongs to the shikimate dehydrogenase family. As to quaternary structure, homodimer.

It catalyses the reaction shikimate + NADP(+) = 3-dehydroshikimate + NADPH + H(+). The protein operates within metabolic intermediate biosynthesis; chorismate biosynthesis; chorismate from D-erythrose 4-phosphate and phosphoenolpyruvate: step 4/7. Its function is as follows. Involved in the biosynthesis of the chorismate, which leads to the biosynthesis of aromatic amino acids. Catalyzes the reversible NADPH linked reduction of 3-dehydroshikimate (DHSA) to yield shikimate (SA). This chain is Shikimate dehydrogenase (NADP(+)), found in Escherichia coli O127:H6 (strain E2348/69 / EPEC).